The primary structure comprises 80 residues: MAKSATIITFLFAALVLFAAFEAPTMVEAQKLCEKPSGTWSGVCGNSNACKNQCINLEGAKHGSCNYVFPAHKCICYVPC.

Positions 1 to 29 (MAKSATIITFLFAALVLFAAFEAPTMVEA) are cleaved as a signal peptide. Residue Gln30 is modified to Pyrrolidone carboxylic acid. 4 disulfide bridges follow: Cys33–Cys80, Cys44–Cys65, Cys50–Cys74, and Cys54–Cys76.

Belongs to the DEFL family.

It localises to the secreted. Confers broad-spectrum resistance to pathogens. The chain is Defensin-like protein 17 (PDF1.2C) from Arabidopsis thaliana (Mouse-ear cress).